Reading from the N-terminus, the 593-residue chain is Arginine--tRNA ligase (593 aa).

The short motif at 138–148 is the 'HIGH' region element; it reads ANPTGPLHVGH.

Belongs to the class-I aminoacyl-tRNA synthetase family. Monomer.

Its subcellular location is the cytoplasm. It catalyses the reaction tRNA(Arg) + L-arginine + ATP = L-arginyl-tRNA(Arg) + AMP + diphosphate. The polypeptide is Arginine--tRNA ligase (Burkholderia lata (strain ATCC 17760 / DSM 23089 / LMG 22485 / NCIMB 9086 / R18194 / 383)).